A 384-amino-acid polypeptide reads, in one-letter code: Viral protein 1 (384 aa).

This is Viral protein 1 from Chaetoceros setoense (Chaetoceros setoense DNA virus).